The chain runs to 277 residues: uncharacterized protein (277 aa).

Residues 139–167 (TARELSLDCSCPDYAVPCKHLAATFYLLA) form an SWIM-type zinc finger.

This is an uncharacterized protein from Mycobacterium tuberculosis (strain ATCC 25618 / H37Rv).